Consider the following 581-residue polypeptide: uncharacterized protein (581 aa).

The N-terminal stretch at M1 to A28 is a signal peptide.

This is an uncharacterized protein from Archaeoglobus fulgidus (strain ATCC 49558 / DSM 4304 / JCM 9628 / NBRC 100126 / VC-16).